The primary structure comprises 172 residues: Large ribosomal subunit protein uL22y (172 aa).

The protein belongs to the universal ribosomal protein uL22 family.

The chain is Large ribosomal subunit protein uL22y from Hordeum vulgare (Barley).